Here is a 66-residue protein sequence, read N- to C-terminus: Large ribosomal subunit protein bL35 (66 aa).

Residues 20 to 40 (GKVKHAQRGKRHGMIKRTKKQ) are disordered.

The protein belongs to the bacterial ribosomal protein bL35 family.

This is Large ribosomal subunit protein bL35 from Nitrobacter winogradskyi (strain ATCC 25391 / DSM 10237 / CIP 104748 / NCIMB 11846 / Nb-255).